The primary structure comprises 113 residues: Hydrogenase maturation factor HybF (113 aa).

The Ni(2+) site is built by His-2 and Glu-3. Zn(2+)-binding residues include Cys-73, Cys-76, Cys-89, and Cys-92.

Belongs to the HypA/HybF family. HybF subfamily.

Involved in the maturation of [NiFe] hydrogenases. Required for nickel insertion into the metal center of the hydrogenase. The polypeptide is Hydrogenase maturation factor HybF (Klebsiella pneumoniae).